Here is a 212-residue protein sequence, read N- to C-terminus: Protein irg-1 (212 aa).

In terms of tissue distribution, expressed in the intestine.

Plays a role in innate immunity by conferring resistance to virulent strains of the Gram-negative bacterium P.aeruginosa via the zip-2 pathway. Can act independently of several immunity-related pathways including pmk-1 p38MAPK, dbl-1 TGF-beta, kgb-1 JNK and bar-1/beta-catenin pathways. This chain is Protein irg-1, found in Caenorhabditis elegans.